A 349-amino-acid polypeptide reads, in one-letter code: Biotin synthase (349 aa).

A Radical SAM core domain is found at 70–295 (PEVEVEGIIS…RTMLRFAGGR (226 aa)). Positions 85, 89, and 92 each coordinate [4Fe-4S] cluster. The [2Fe-2S] cluster site is built by Cys128, Cys161, Cys220, and Arg290.

The protein belongs to the radical SAM superfamily. Biotin synthase family. In terms of assembly, homodimer. Requires [4Fe-4S] cluster as cofactor. [2Fe-2S] cluster serves as cofactor.

It carries out the reaction (4R,5S)-dethiobiotin + (sulfur carrier)-SH + 2 reduced [2Fe-2S]-[ferredoxin] + 2 S-adenosyl-L-methionine = (sulfur carrier)-H + biotin + 2 5'-deoxyadenosine + 2 L-methionine + 2 oxidized [2Fe-2S]-[ferredoxin]. It functions in the pathway cofactor biosynthesis; biotin biosynthesis; biotin from 7,8-diaminononanoate: step 2/2. Functionally, catalyzes the conversion of dethiobiotin (DTB) to biotin by the insertion of a sulfur atom into dethiobiotin via a radical-based mechanism. The chain is Biotin synthase from Mycobacterium bovis (strain ATCC BAA-935 / AF2122/97).